We begin with the raw amino-acid sequence, 126 residues long: Adult-specific rigid cuticular protein 12.4 (126 aa).

Residues 9–87 (GGAYNFGFNT…AMAALAPKAP (79 aa)) form the Chitin-binding type R&amp;R domain.

In terms of biological role, component of the rigid cuticle of the spider. The sequence is that of Adult-specific rigid cuticular protein 12.4 from Araneus diadematus (European garden spider).